Consider the following 136-residue polypeptide: 5-hydroxyisourate hydrolase (136 aa).

An N-terminal signal peptide occupies residues 1–20 (MKRYILATAIASLVAAPAMA). 3 residues coordinate substrate: His31, Arg69, and Tyr133.

It belongs to the transthyretin family. 5-hydroxyisourate hydrolase subfamily. Homotetramer.

Its subcellular location is the periplasm. It carries out the reaction 5-hydroxyisourate + H2O = 5-hydroxy-2-oxo-4-ureido-2,5-dihydro-1H-imidazole-5-carboxylate + H(+). Catalyzes the hydrolysis of 5-hydroxyisourate (HIU) to 2-oxo-4-hydroxy-4-carboxy-5-ureidoimidazoline (OHCU). This is 5-hydroxyisourate hydrolase (hiuH) from Salmonella typhi.